A 171-amino-acid polypeptide reads, in one-letter code: uncharacterized protein (171 aa).

The tract at residues 123-171 is disordered; the sequence is CTKRDLRNDPPPAYQPDDPLKDLRKNFEKKEKPTWNDVEKKKNGVFEFH. The span at 140-171 shows a compositional bias: basic and acidic residues; the sequence is DPLKDLRKNFEKKEKPTWNDVEKKKNGVFEFH.

This is an uncharacterized protein from Caenorhabditis elegans.